The following is an 809-amino-acid chain: Origin of replication complex subunit 1A (809 aa).

Over residues 1–47 the composition is skewed to low complexity; it reads MASSLSSKAKTFKSPTKTPTKMYRKSYLSPSSTSLTPPQTPETLTPL. Residues 1–69 form a disordered region; it reads MASSLSSKAK…LGNDPIDLPG (69 aa). Residues 160-185 form a histone H3 binding region; the sequence is DPEIEDCQICFKSHTNTIMIECDDCL. A PHD-type zinc finger spans residues 163-213; that stretch reads IEDCQICFKSHTNTIMIECDDCLGGFHLNCLKPPLKEVPEGDWICQFCEVK. Residues C166, C169, C181, C184, H189, and C192 each contribute to the Zn(2+) site. The segment at 201–205 is histone H3 binding; the sequence is PEGDW. Zn(2+) contacts are provided by C207 and C210. The BAH domain occupies 223 to 341; it reads PKPPEGKKLA…VHWGSFKRVA (119 aa). The segment at 316 to 321 is histone H3 binding; that stretch reads ASNDGD. Positions 431 to 799 are necessary and sufficient for ORC complex assembly; sequence PKSLPCRSKE…DDVAFALKDN (369 aa). ATP is bound by residues 466–473 and 466–474; these read GVPGTGKT and GVPGTGKTI. Mg(2+) is bound by residues D556 and E557. ATP is bound by residues E557, N590, and R655.

Belongs to the ORC1 family. In terms of assembly, component of the origin recognition complex (ORC) composed of at least ORC1 (ORC1A or ORC1B), ORC2, ORC3, ORC4, ORC5 and ORC6. ORC is regulated in a cell-cycle and development dependent manner. It is sequentially assembled at the exit from anaphase of mitosis and disassembled as cells enter S phase. Interacts directly with ORC2, ORC3, ORC4 and ORC5. Binds mostly unmodified histone H3, and, with lower efficiency, H3K4me1 H3K4me2 and H3K4me3. In terms of tissue distribution, follow a cell-cycle regulation with a peak at the G1/S-phase. Mostly expressed in siliques, flowers and flower buds, and, to a lower extent, in roots, leaves and stems.

It is found in the nucleus. In terms of biological role, essential protein. Component of the origin recognition complex (ORC) that binds origins of replication. It has a role in both chromosomal replication and mating type transcriptional silencing. Binds to the ARS consensus sequence (ACS) of origins of replication. H3K4me3 effector that positively regulates the transcription of a subset of genes. This is Origin of replication complex subunit 1A from Arabidopsis thaliana (Mouse-ear cress).